The primary structure comprises 392 residues: Trans-2-enoyl-CoA reductase [NADH] (392 aa).

NAD(+) is bound by residues 74 to 75 (FE), 111 to 112 (DA), and 141 to 142 (LA). Tyrosine 227 lines the substrate pocket. Residue tyrosine 237 is the Proton donor of the active site. NAD(+) is bound by residues lysine 246 and 276-278 (VVT).

It belongs to the TER reductase family. Monomer.

It carries out the reaction a 2,3-saturated acyl-CoA + NAD(+) = a (2E)-enoyl-CoA + NADH + H(+). It functions in the pathway lipid metabolism; fatty acid biosynthesis. In terms of biological role, involved in the fatty acid synthesis (FAS II). Catalyzes the reduction of a carbon-carbon double bond in an enoyl moiety that is covalently linked to a coenzyme A (CoA). The polypeptide is Trans-2-enoyl-CoA reductase [NADH] (Brachyspira hyodysenteriae (strain ATCC 49526 / WA1)).